A 577-amino-acid polypeptide reads, in one-letter code: Arginine--tRNA ligase (577 aa).

The short motif at P122–H132 is the 'HIGH' region element.

It belongs to the class-I aminoacyl-tRNA synthetase family. As to quaternary structure, monomer.

The protein resides in the cytoplasm. It catalyses the reaction tRNA(Arg) + L-arginine + ATP = L-arginyl-tRNA(Arg) + AMP + diphosphate. The protein is Arginine--tRNA ligase of Escherichia coli O8 (strain IAI1).